The sequence spans 1028 residues: RNA cytidine acetyltransferase 2 (1028 aa).

ATP is bound by residues 286 to 295 and Arg458; that span reads GRGKSAALGL. Residues 546 to 729 enclose the N-acetyltransferase domain; it reads VLLGPVDESQ…FAPFYVSQIP (184 aa). Residues 617-619, 624-630, and Lys717 each bind acetyl-CoA; these read IAV and MKMGYGS. The segment at 982–1028 is disordered; that stretch reads SGIISVKSTKSENENGFDKSTKKRSSDKRSSSSSKSKSSKKRKSLKE. The segment covering 990 to 1001 has biased composition (basic and acidic residues); the sequence is TKSENENGFDKS. Residues 1018-1028 show a composition bias toward basic residues; the sequence is KSSKKRKSLKE.

This sequence belongs to the RNA cytidine acetyltransferase family. NAT10 subfamily.

It localises to the nucleus. Its subcellular location is the nucleolus. It catalyses the reaction a cytidine in 18S rRNA + acetyl-CoA + ATP + H2O = an N(4)-acetylcytidine in 18S rRNA + ADP + phosphate + CoA + H(+). The enzyme catalyses a cytidine in tRNA + acetyl-CoA + ATP + H2O = an N(4)-acetylcytidine in tRNA + ADP + phosphate + CoA + H(+). Functionally, RNA cytidine acetyltransferase with specificity toward both 18S rRNA and tRNAs. Catalyzes the formation of N(4)-acetylcytidine (ac4C) in 18S rRNA. Required for early nucleolar cleavages of precursor rRNA at sites A0, A1 and A2 during 18S rRNA synthesis. Catalyzes the formation of ac4C in serine and leucine tRNAs. Requires a tRNA-binding adapter protein for full tRNA acetyltransferase activity but not for 18S rRNA acetylation. The polypeptide is RNA cytidine acetyltransferase 2 (Arabidopsis thaliana (Mouse-ear cress)).